A 477-amino-acid polypeptide reads, in one-letter code: Tyrosine--tRNA ligase, mitochondrial (477 aa).

The N-terminal 16 residues, 1 to 16 (MAAPILRSFSWGRWSG), are a transit peptide targeting the mitochondrion. An L-tyrosine-binding site is contributed by Y77. D81 serves as a coordination point for ATP. Residues 82 to 91 (PTADSLHVGH) carry the 'HIGH' region motif. D121, Y221, Q225, and D228 together coordinate L-tyrosine. 244 to 246 (GSD) is an ATP binding site. L-tyrosine is bound at residue Q247. The ATP site is built by I274 and K284. Residues 281–285 (KLGKS) carry the 'KMSKS' region motif. Residues K355 and K367 each carry the N6-acetyllysine modification.

It belongs to the class-I aminoacyl-tRNA synthetase family. In terms of assembly, homodimer.

It localises to the mitochondrion matrix. The enzyme catalyses tRNA(Tyr) + L-tyrosine + ATP = L-tyrosyl-tRNA(Tyr) + AMP + diphosphate + H(+). In terms of biological role, catalyzes the attachment of tyrosine to tRNA(Tyr) in a two-step reaction: tyrosine is first activated by ATP to form Tyr-AMP and then transferred to the acceptor end of tRNA(Tyr). The sequence is that of Tyrosine--tRNA ligase, mitochondrial (YARS2) from Homo sapiens (Human).